Here is a 229-residue protein sequence, read N- to C-terminus: Transmembrane emp24 domain-containing protein 5 (229 aa).

Positions 1–27 (MGGRMWLPFPVLLLSALPAALLRGAAG) are cleaved as a signal peptide. Residues 28-196 (FTPSLDSDFT…IQESNFDRVN (169 aa)) are Lumenal-facing. Residues 45–126 (KECFYQPMPL…EKVIFFELIL (82 aa)) enclose the GOLD domain. A helical transmembrane segment spans residues 197-217 (FWSVVNLMVMVVVSAIQVYTL). Residues 218–229 (KSLFEDKRKSRT) lie on the Cytoplasmic side of the membrane.

The protein belongs to the EMP24/GP25L family. Interacts with TMED9 and TMED10.

The protein localises to the endoplasmic reticulum membrane. It localises to the golgi apparatus. Its subcellular location is the cis-Golgi network membrane. The protein resides in the endoplasmic reticulum-Golgi intermediate compartment membrane. Potential role in vesicular protein trafficking, mainly in the early secretory pathway. Required for the maintenance of the Golgi apparatus; involved in protein exchange between Golgi stacks during assembly. Probably not required for COPI-vesicle-mediated retrograde transport. The polypeptide is Transmembrane emp24 domain-containing protein 5 (Tmed5) (Mus musculus (Mouse)).